Consider the following 403-residue polypeptide: Probable tRNA sulfurtransferase (403 aa).

Residues 60–165 (QLVEERLKPI…KEGVFLSCRT (106 aa)) form the THUMP domain. Residues 183 to 184 (ML), 208 to 209 (HF), Arg-265, Gly-287, and Gln-296 contribute to the ATP site.

This sequence belongs to the ThiI family.

The protein resides in the cytoplasm. It carries out the reaction [ThiI sulfur-carrier protein]-S-sulfanyl-L-cysteine + a uridine in tRNA + 2 reduced [2Fe-2S]-[ferredoxin] + ATP + H(+) = [ThiI sulfur-carrier protein]-L-cysteine + a 4-thiouridine in tRNA + 2 oxidized [2Fe-2S]-[ferredoxin] + AMP + diphosphate. The catalysed reaction is [ThiS sulfur-carrier protein]-C-terminal Gly-Gly-AMP + S-sulfanyl-L-cysteinyl-[cysteine desulfurase] + AH2 = [ThiS sulfur-carrier protein]-C-terminal-Gly-aminoethanethioate + L-cysteinyl-[cysteine desulfurase] + A + AMP + 2 H(+). It participates in cofactor biosynthesis; thiamine diphosphate biosynthesis. Functionally, catalyzes the ATP-dependent transfer of a sulfur to tRNA to produce 4-thiouridine in position 8 of tRNAs, which functions as a near-UV photosensor. Also catalyzes the transfer of sulfur to the sulfur carrier protein ThiS, forming ThiS-thiocarboxylate. This is a step in the synthesis of thiazole, in the thiamine biosynthesis pathway. The sulfur is donated as persulfide by IscS. This is Probable tRNA sulfurtransferase from Listeria monocytogenes serotype 4b (strain CLIP80459).